Reading from the N-terminus, the 148-residue chain is MESPRNHGGSEEEEYSSCESGWTMYIEDAFHGNDQSSVVVDDDDDDTQVKEADDGYENDDGDTSDDGGDEESDDSMASDASSGPSNQLPKHINKHAARKNGSKQVYLQKRQHTEKTISNEGEKSDLKARTRTSAASRVQSRGKVSKTK.

Residues 1–10 are compositionally biased toward basic and acidic residues; sequence MESPRNHGGS. Disordered stretches follow at residues 1-20 and 33-148; these read MESP…SCES and NDQS…SKTK. Positions 20–25 match the SOFL-A motif; the sequence is SGWTMY. The segment covering 54–76 has biased composition (acidic residues); sequence DGYENDDGDTSDDGGDEESDDSM. Residues 75-84 carry the SOFL-B motif; it reads SMASDASSGP. Residues 91-101 show a composition bias toward basic residues; the sequence is HINKHAARKNG. Positions 111-128 are enriched in basic and acidic residues; sequence QHTEKTISNEGEKSDLKA.

It belongs to the SOFL plant protein family. Predominantly expressed in the vascular tissues of seedlings, developing leaves, flowers and siliques, but barely detectable in roots and stems.

It is found in the cytoplasm. Its subcellular location is the nucleus. Its function is as follows. Involved in cytokinin-mediated development. Together with SOFL2, triggers the endogenous content of specific bioactive cytokinins derived from the biosynthetic intermediates trans-zeatin riboside monophosphate (tZRMP) and N(6)-(Delta(2)-isopentenyl)adenosine monophosphate (iPRMP) such as N-glucosides trans-zeatin 7-glucoside (tZ7G), cis-zeatin 7-glucoside (cZ7G) and N(6)-(Delta(2)-isopentenyl)adenine 7-glucoside (iP7G). This Arabidopsis thaliana (Mouse-ear cress) protein is Protein SOB FIVE-LIKE 1.